The chain runs to 341 residues: GTPase Obg (341 aa).

The 159-residue stretch at 2–160 (SGFIDEVPIQ…FSLILELKLL (159 aa)) folds into the Obg domain. The region spanning 161 to 330 (ADIGIVGLPN…LLERIDKVFF (170 aa)) is the OBG-type G domain. GTP contacts are provided by residues 167 to 174 (GLPNAGKS), 192 to 196 (FTTLS), 215 to 218 (DIPG), 282 to 285 (NKMD), and 311 to 313 (SAD). Residues Ser174 and Thr194 each coordinate Mg(2+).

This sequence belongs to the TRAFAC class OBG-HflX-like GTPase superfamily. OBG GTPase family. As to quaternary structure, monomer. The cofactor is Mg(2+).

It is found in the cytoplasm. Functionally, an essential GTPase which binds GTP, GDP and possibly (p)ppGpp with moderate affinity, with high nucleotide exchange rates and a fairly low GTP hydrolysis rate. Plays a role in control of the cell cycle, stress response, ribosome biogenesis and in those bacteria that undergo differentiation, in morphogenesis control. This Leptospira biflexa serovar Patoc (strain Patoc 1 / Ames) protein is GTPase Obg.